We begin with the raw amino-acid sequence, 257 residues long: UPF0246 protein PC1_3665 (257 aa).

It belongs to the UPF0246 family.

In Pectobacterium carotovorum subsp. carotovorum (strain PC1), this protein is UPF0246 protein PC1_3665.